The chain runs to 459 residues: LAS seventeen-binding protein 3 (459 aa).

The segment at 219–403 is disordered; the sequence is RPSNGGRGSF…APTSPSTSSP (185 aa). Serine 227 bears the Phosphoserine mark. Acidic residues predominate over residues 229-242; sequence DDDEDDYYDDDDYY. Low complexity predominate over residues 243–262; the sequence is NDIPSSFSSTDASSTRPNTR. Residues 289–300 show a composition bias toward polar residues; the sequence is YSRNSRLAPTNS. At threonine 298 the chain carries Phosphothreonine. Residues serine 300 and serine 303 each carry the phosphoserine modification. The segment covering 340 to 350 has biased composition (acidic residues); that stretch reads DEYDDYDDDYE. Residues 351-371 show a composition bias toward basic and acidic residues; that stretch reads SGYRRGNGRDRTKDREVDDLS. Residues 372–391 are compositionally biased toward polar residues; that stretch reads NRFSKSRISSASTPQTSQGR. The residue at position 393 (threonine 393) is a Phosphothreonine. The segment covering 393 to 403 has biased composition (low complexity); the sequence is TAPTSPSTSSP. A phosphoserine mark is found at serine 397, serine 402, and serine 416. One can recognise an SH3 domain in the interval 400–459; the sequence is TSSPKAVALYSFAGEESGDLPFRKGDVITILKKSDSQNDWWTGRVNGREGIFPANYVELV.

Belongs to the SH3YL1 family. Interacts with LAS17. In terms of processing, phosphorylation of Ser-397 is induced 2-fold in response to mating pheromone.

The protein localises to the cytoplasm. The protein is LAS seventeen-binding protein 3 (LSB3) of Saccharomyces cerevisiae (strain YJM789) (Baker's yeast).